Consider the following 113-residue polypeptide: DIVMTQAVFSNPVTLGTSASISCRSSKSLLHSNGITYLYWYLQKPGQSPQLLLYQMSNLASGVPDRFSSSGSGTDFTLRISRVEAEDVGVYYCAHNLELPYTFGGGTKLEIKR.

The tract at residues 1–23 (DIVMTQAVFSNPVTLGTSASISC) is framework-1. Cysteines 23 and 93 form a disulfide. The interval 24–39 (RSSKSLLHSNGITYLY) is complementarity-determining-1. The framework-2 stretch occupies residues 40-54 (WYLQKPGQSPQLLLY). The interval 55-61 (QMSNLAS) is complementarity-determining-2. The segment at 62–93 (GVPDRFSSSGSGTDFTLRISRVEAEDVGVYYC) is framework-3. Residues 94–102 (AHNLELPYT) are complementarity-determining-3. Residues 103–112 (FGGGTKLEIK) form a framework-4 region.

In terms of biological role, anti-streptococcal group A carbohydrate antibody. This Mus musculus (Mouse) protein is Ig kappa chain V-II region 17S29.1.